A 69-amino-acid polypeptide reads, in one-letter code: uncharacterized protein (69 aa).

The CHCH domain maps to 6–56; sequence SEECTPAKKKYDACFNDWYANKFLKGDLHNRDCDELFAEYKSCLLKALKTK. Short sequence motifs (cx9C motif) lie at residues 9-19 and 38-48; these read CTPAKKKYDAC and CDELFAEYKSC. Cystine bridges form between Cys9-Cys48 and Cys19-Cys38.

It belongs to the TRIAP1/MDM35 family.

This is an uncharacterized protein from Schizosaccharomyces pombe (strain 972 / ATCC 24843) (Fission yeast).